The chain runs to 210 residues: MSAALLSLVQWLSPAFPTGAFAYSHGLEWAISEGEVRDAASARRWIADVLAFGAGRTDAILLAHALRGHDPEALSDLARALAPAAERLRETEEQGAAFAATVAALTGRDLPPRPLPVALGQAAAPLGLPVAEVLALMLHAFAANLVSAAVRFVPLGQTEGQATLAALHPLIGEIAAESAEAPLDALGSAALRGDLAAMRHETQEVRIFKT.

The protein belongs to the UreF family. In terms of assembly, ureD, UreF and UreG form a complex that acts as a GTP-hydrolysis-dependent molecular chaperone, activating the urease apoprotein by helping to assemble the nickel containing metallocenter of UreC. The UreE protein probably delivers the nickel.

It is found in the cytoplasm. Functionally, required for maturation of urease via the functional incorporation of the urease nickel metallocenter. The chain is Urease accessory protein UreF from Cereibacter sphaeroides (strain ATCC 17029 / ATH 2.4.9) (Rhodobacter sphaeroides).